The primary structure comprises 190 residues: Nuclear transcription factor Y subunit B-2 (190 aa).

Residues 1 to 30 (MGDSDRDSGGGQNGNNQNGQSSLSPREQDR) form a disordered region. A DNA-binding region spans residues 32–38 (LPIANVS). The segment at 59 to 70 (MQECVSEFISFV) is subunit association domain (SAD). A disordered region spans residues 168-190 (HMYGATGGGSDSGGGAASGRTRT). A compositionally biased stretch (gly residues) spans 172-184 (ATGGGSDSGGGAA).

This sequence belongs to the NFYB/HAP3 subunit family. As to quaternary structure, heterotrimeric transcription factor composed of three components, NF-YA, NF-YB and NF-YC. NF-YB and NF-YC must interact and dimerize for NF-YA association and DNA binding. Binds directly with DPB3-1. As to expression, ubiquitous. Predominantly expressed in flowers and siliques.

It localises to the nucleus. In terms of biological role, component of the NF-Y/HAP transcription factor complex. The NF-Y complex stimulates the transcription of various genes by recognizing and binding to a CCAAT motif in promoters. In Arabidopsis thaliana (Mouse-ear cress), this protein is Nuclear transcription factor Y subunit B-2.